A 114-amino-acid polypeptide reads, in one-letter code: Fumarate reductase subunit D (114 aa).

3 consecutive transmembrane segments (helical) span residues 27–47 (ICFPVLLLILGVLLPLGLVPV), 50–70 (IVAFAHTWFGKLVILAVTIFP), and 94–114 (WVFYGLSALYSVIVFFAVIAL).

The protein belongs to the FrdD family. In terms of assembly, part of an enzyme complex containing four subunits: a flavoprotein (FrdA), an iron-sulfur protein (FrdB), and two hydrophobic anchor proteins (FrdC and FrdD).

Its subcellular location is the cell inner membrane. In terms of biological role, anchors the catalytic components of the fumarate reductase complex to the cell membrane, binds quinones. The polypeptide is Fumarate reductase subunit D (Actinobacillus pleuropneumoniae serotype 3 (strain JL03)).